The following is a 521-amino-acid chain: Glutamyl-tRNA(Gln) amidotransferase subunit A (521 aa).

Catalysis depends on charge relay system residues Lys-79 and Ser-187. Ser-211 functions as the Acyl-ester intermediate in the catalytic mechanism.

It belongs to the amidase family. GatA subfamily. In terms of assembly, heterotrimer of A, B and C subunits.

The enzyme catalyses L-glutamyl-tRNA(Gln) + L-glutamine + ATP + H2O = L-glutaminyl-tRNA(Gln) + L-glutamate + ADP + phosphate + H(+). Functionally, allows the formation of correctly charged Gln-tRNA(Gln) through the transamidation of misacylated Glu-tRNA(Gln) in organisms which lack glutaminyl-tRNA synthetase. The reaction takes place in the presence of glutamine and ATP through an activated gamma-phospho-Glu-tRNA(Gln). The protein is Glutamyl-tRNA(Gln) amidotransferase subunit A of Mesorhizobium japonicum (strain LMG 29417 / CECT 9101 / MAFF 303099) (Mesorhizobium loti (strain MAFF 303099)).